The following is a 631-amino-acid chain: Biotin--protein ligase (631 aa).

The region spanning 341-553 is the BPL/LPL catalytic domain; that stretch reads ELYAKLINGC…QFDRYHRLLL (213 aa).

Belongs to the biotin--protein ligase family. Monomer.

The protein resides in the cytoplasm. The catalysed reaction is apo-[methylmalonyl-CoA:pyruvate carboxytransferase] + biotin + ATP = holo-[methylmalonyl-CoA:pyruvate carboxytransferase] + AMP + diphosphate + H(+). The enzyme catalyses apo-[propionyl-CoA:carbon-dioxide ligase (ADP-forming)] + biotin + ATP = holo-[propionyl-CoA:carbon-dioxide ligase (ADP-forming)] + AMP + diphosphate + H(+). It catalyses the reaction apo-[3-methylcrotonoyl-CoA:carbon-dioxide ligase (ADP-forming)] + biotin + ATP = holo-[3-methylcrotonoyl-CoA:carbon-dioxide ligase (ADP-forming)] + AMP + diphosphate + H(+). It carries out the reaction biotin + L-lysyl-[protein] + ATP = N(6)-biotinyl-L-lysyl-[protein] + AMP + diphosphate + H(+). In terms of biological role, post-translational modification of specific protein by attachment of biotin. Acts on various carboxylases such as acetyl-CoA-carboxylase, pyruvate carboxylase, propionyl CoA carboxylase, and 3-methylcrotonyl CoA carboxylase. This is Biotin--protein ligase (bpl1) from Schizosaccharomyces pombe (strain 972 / ATCC 24843) (Fission yeast).